We begin with the raw amino-acid sequence, 214 residues long: MKRIDFTLYAITDRSFIKGMDIAEAVEIAIKNGVTVVQLREKDISSREFYEIALKVKEVTRKYNVPLIINDRVDIALAVDAEGVHVGPDDLPVGVVRRILGPDKIVGGSAYSVEEALKAEKEGADYIGAGSVFAQPVKPEAEVIGIEGVRKIKEAVNIPVVAIGGVNKTNAYEVILHSGVDGISAIAGIFDGDIEANTKDMLREIRRAFKERGK.

4-amino-2-methyl-5-(diphosphooxymethyl)pyrimidine-binding positions include 38–42 and Asn-70; that span reads QLREK. The Mg(2+) site is built by Asp-71 and Asp-90. 4-amino-2-methyl-5-(diphosphooxymethyl)pyrimidine contacts are provided by Ser-109 and Lys-138. 2-[(2R,5Z)-2-carboxy-4-methylthiazol-5(2H)-ylidene]ethyl phosphate is bound at residue Gly-165.

The protein belongs to the thiamine-phosphate synthase family. Mg(2+) is required as a cofactor.

The enzyme catalyses 2-[(2R,5Z)-2-carboxy-4-methylthiazol-5(2H)-ylidene]ethyl phosphate + 4-amino-2-methyl-5-(diphosphooxymethyl)pyrimidine + 2 H(+) = thiamine phosphate + CO2 + diphosphate. The catalysed reaction is 2-(2-carboxy-4-methylthiazol-5-yl)ethyl phosphate + 4-amino-2-methyl-5-(diphosphooxymethyl)pyrimidine + 2 H(+) = thiamine phosphate + CO2 + diphosphate. It carries out the reaction 4-methyl-5-(2-phosphooxyethyl)-thiazole + 4-amino-2-methyl-5-(diphosphooxymethyl)pyrimidine + H(+) = thiamine phosphate + diphosphate. Its pathway is cofactor biosynthesis; thiamine diphosphate biosynthesis; thiamine phosphate from 4-amino-2-methyl-5-diphosphomethylpyrimidine and 4-methyl-5-(2-phosphoethyl)-thiazole: step 1/1. Its function is as follows. Condenses 4-methyl-5-(beta-hydroxyethyl)thiazole monophosphate (THZ-P) and 2-methyl-4-amino-5-hydroxymethyl pyrimidine pyrophosphate (HMP-PP) to form thiamine monophosphate (TMP). The protein is Thiamine-phosphate synthase of Caldanaerobacter subterraneus subsp. tengcongensis (strain DSM 15242 / JCM 11007 / NBRC 100824 / MB4) (Thermoanaerobacter tengcongensis).